The primary structure comprises 200 residues: Small ribosomal subunit protein uS4 (200 aa).

The S4 RNA-binding domain occupies 92–155 (SRLDNLVYRM…RNLTVVKEAL (64 aa)).

The protein belongs to the universal ribosomal protein uS4 family. In terms of assembly, part of the 30S ribosomal subunit. Contacts protein S5. The interaction surface between S4 and S5 is involved in control of translational fidelity.

Its function is as follows. One of the primary rRNA binding proteins, it binds directly to 16S rRNA where it nucleates assembly of the body of the 30S subunit. Functionally, with S5 and S12 plays an important role in translational accuracy. This Shouchella clausii (strain KSM-K16) (Alkalihalobacillus clausii) protein is Small ribosomal subunit protein uS4.